A 125-amino-acid chain; its full sequence is Bublin coiled-coil protein (125 aa).

Residues 46 to 95 (IRKLDTQLDHLNDYMSKMEERLKAHNDRMMETLKQQKEEREKRRRSFHER) adopt a coiled-coil conformation. The segment at 79 to 125 (KQQKEEREKRRRSFHERMSQNQSEDEEFKKQMSSILKRVQSVKRTEK) is disordered.

Expressed in many epithelial tissues, including the pharynx, intestine, excretory canal and hypodermis.

Its subcellular location is the cell junction. It localises to the cytoplasm. The protein localises to the cytoskeleton. Functionally, dynamic component of the endotube in intestinal cells, interacts with intermediate filament and regulates intestinal lumen morphology. This is Bublin coiled-coil protein from Caenorhabditis elegans.